A 393-amino-acid polypeptide reads, in one-letter code: Glucose-1-phosphate adenylyltransferase (393 aa).

Residues Tyr-105, Gly-170, 185–186 (EK), and Ser-196 contribute to the alpha-D-glucose 1-phosphate site.

Belongs to the bacterial/plant glucose-1-phosphate adenylyltransferase family. Homotetramer.

It catalyses the reaction alpha-D-glucose 1-phosphate + ATP + H(+) = ADP-alpha-D-glucose + diphosphate. Its pathway is glycan biosynthesis; glycogen biosynthesis. Its function is as follows. Involved in the biosynthesis of ADP-glucose, a building block required for the elongation reactions to produce glycogen. Catalyzes the reaction between ATP and alpha-D-glucose 1-phosphate (G1P) to produce pyrophosphate and ADP-Glc. In Clostridium perfringens (strain 13 / Type A), this protein is Glucose-1-phosphate adenylyltransferase.